The sequence spans 272 residues: Indole-3-glycerol phosphate synthase (272 aa).

The protein belongs to the TrpC family.

It catalyses the reaction 1-(2-carboxyphenylamino)-1-deoxy-D-ribulose 5-phosphate + H(+) = (1S,2R)-1-C-(indol-3-yl)glycerol 3-phosphate + CO2 + H2O. It participates in amino-acid biosynthesis; L-tryptophan biosynthesis; L-tryptophan from chorismate: step 4/5. The sequence is that of Indole-3-glycerol phosphate synthase from Mycolicibacterium smegmatis (strain ATCC 700084 / mc(2)155) (Mycobacterium smegmatis).